A 483-amino-acid polypeptide reads, in one-letter code: L-2-hydroxyglutarate dehydrogenase, mitochondrial (483 aa).

A mitochondrion-targeting transit peptide spans 1 to 67; it reads MKHKPETAAF…VDASKTIVRG (67 aa).

The protein belongs to the L2HGDH family. Requires FAD as cofactor.

It localises to the mitochondrion. The catalysed reaction is (S)-2-hydroxyglutarate + A = 2-oxoglutarate + AH2. In terms of biological role, catalyzes the oxidation of (S)-2-hydroxyglutarate to 2-oxoglutarate. Is specific for the (S) enantiomer and possesses very poor activity toward (R)-2-hydroxyglutarate. Has no activity toward related 2-hydroxy acids, such as glycolate, L-lactate or D-lactate. In Arabidopsis thaliana (Mouse-ear cress), this protein is L-2-hydroxyglutarate dehydrogenase, mitochondrial.